The chain runs to 244 residues: 5-oxoprolinase subunit A (244 aa).

It belongs to the LamB/PxpA family. Forms a complex composed of PxpA, PxpB and PxpC.

The enzyme catalyses 5-oxo-L-proline + ATP + 2 H2O = L-glutamate + ADP + phosphate + H(+). In terms of biological role, catalyzes the cleavage of 5-oxoproline to form L-glutamate coupled to the hydrolysis of ATP to ADP and inorganic phosphate. The polypeptide is 5-oxoprolinase subunit A (Salmonella dublin (strain CT_02021853)).